We begin with the raw amino-acid sequence, 224 residues long: Phosphoribosylformylglycinamidine synthase subunit PurQ (224 aa).

The Glutamine amidotransferase type-1 domain maps to 4–224 (RIGIITFPGT…YSVLDGVLAG (221 aa)). The Nucleophile role is filled by Cys-87. Residues His-195 and Glu-197 contribute to the active site.

In terms of assembly, part of the FGAM synthase complex composed of 1 PurL, 1 PurQ and 2 PurS subunits.

It localises to the cytoplasm. The enzyme catalyses N(2)-formyl-N(1)-(5-phospho-beta-D-ribosyl)glycinamide + L-glutamine + ATP + H2O = 2-formamido-N(1)-(5-O-phospho-beta-D-ribosyl)acetamidine + L-glutamate + ADP + phosphate + H(+). It carries out the reaction L-glutamine + H2O = L-glutamate + NH4(+). Its pathway is purine metabolism; IMP biosynthesis via de novo pathway; 5-amino-1-(5-phospho-D-ribosyl)imidazole from N(2)-formyl-N(1)-(5-phospho-D-ribosyl)glycinamide: step 1/2. In terms of biological role, part of the phosphoribosylformylglycinamidine synthase complex involved in the purines biosynthetic pathway. Catalyzes the ATP-dependent conversion of formylglycinamide ribonucleotide (FGAR) and glutamine to yield formylglycinamidine ribonucleotide (FGAM) and glutamate. The FGAM synthase complex is composed of three subunits. PurQ produces an ammonia molecule by converting glutamine to glutamate. PurL transfers the ammonia molecule to FGAR to form FGAM in an ATP-dependent manner. PurS interacts with PurQ and PurL and is thought to assist in the transfer of the ammonia molecule from PurQ to PurL. This is Phosphoribosylformylglycinamidine synthase subunit PurQ from Mycolicibacterium paratuberculosis (strain ATCC BAA-968 / K-10) (Mycobacterium paratuberculosis).